Consider the following 330-residue polypeptide: Aspartate--ammonia ligase (330 aa).

This sequence belongs to the class-II aminoacyl-tRNA synthetase family. AsnA subfamily.

It is found in the cytoplasm. The catalysed reaction is L-aspartate + NH4(+) + ATP = L-asparagine + AMP + diphosphate + H(+). The protein operates within amino-acid biosynthesis; L-asparagine biosynthesis; L-asparagine from L-aspartate (ammonia route): step 1/1. In Cronobacter sakazakii (strain ATCC BAA-894) (Enterobacter sakazakii), this protein is Aspartate--ammonia ligase.